Consider the following 105-residue polypeptide: Large ribosomal subunit protein bL21 (105 aa).

The protein belongs to the bacterial ribosomal protein bL21 family. In terms of assembly, part of the 50S ribosomal subunit. Contacts protein L20.

Its function is as follows. This protein binds to 23S rRNA in the presence of protein L20. This Frankia casuarinae (strain DSM 45818 / CECT 9043 / HFP020203 / CcI3) protein is Large ribosomal subunit protein bL21.